The following is a 120-amino-acid chain: MGSMTLLFFVEHVFIFCMIFWLLTWVAEYFFKSKNNKQKHQFYECGIRALSELNIQINLNFSIVCVFLILYDVEFIFMYPFFFNFFLVNAGAFLVFFVFLFFVFYSLVYDSVQNSLALQL.

The next 3 membrane-spanning stretches (helical) occupy residues 6-26 (LLFFVEHVFIFCMIFWLLTWV), 63-83 (IVCVFLILYDVEFIFMYPFFF), and 85-105 (FFLVNAGAFLVFFVFLFFVFY).

It belongs to the complex I subunit 3 family.

The protein localises to the mitochondrion membrane. The catalysed reaction is a ubiquinone + NADH + 5 H(+)(in) = a ubiquinol + NAD(+) + 4 H(+)(out). Its function is as follows. Core subunit of the mitochondrial membrane respiratory chain NADH dehydrogenase (Complex I) that is believed to belong to the minimal assembly required for catalysis. Complex I functions in the transfer of electrons from NADH to the respiratory chain. The immediate electron acceptor for the enzyme is believed to be ubiquinone. This chain is NADH-ubiquinone oxidoreductase chain 3 (ND3), found in Paramecium tetraurelia.